We begin with the raw amino-acid sequence, 197 residues long: MIALLNGQLIEKTVSQVILDVGGVGYRLLIPLSTYYALPDEGDVRLRVHTHVREDALLLFGFLTETEKDLFGLLLSVSGVGPKVALNILSHLPAADLQQALSQGNAKHLATVPGIGKKTAERLVLELREKVGPVQAVPGNAPLPAETAGDLREDALSALVNLGYKENLSRKALDGIDTAPDAPLEDILKQALKLLMR.

A domain I region spans residues 1 to 63; the sequence is MIALLNGQLI…EDALLLFGFL (63 aa). Residues 64-142 are domain II; that stretch reads TETEKDLFGL…PVQAVPGNAP (79 aa). A flexible linker region spans residues 142–146; it reads PLPAE. The segment at 147 to 197 is domain III; the sequence is TAGDLREDALSALVNLGYKENLSRKALDGIDTAPDAPLEDILKQALKLLMR.

This sequence belongs to the RuvA family. In terms of assembly, homotetramer. Forms an RuvA(8)-RuvB(12)-Holliday junction (HJ) complex. HJ DNA is sandwiched between 2 RuvA tetramers; dsDNA enters through RuvA and exits via RuvB. An RuvB hexamer assembles on each DNA strand where it exits the tetramer. Each RuvB hexamer is contacted by two RuvA subunits (via domain III) on 2 adjacent RuvB subunits; this complex drives branch migration. In the full resolvosome a probable DNA-RuvA(4)-RuvB(12)-RuvC(2) complex forms which resolves the HJ.

Its subcellular location is the cytoplasm. Functionally, the RuvA-RuvB-RuvC complex processes Holliday junction (HJ) DNA during genetic recombination and DNA repair, while the RuvA-RuvB complex plays an important role in the rescue of blocked DNA replication forks via replication fork reversal (RFR). RuvA specifically binds to HJ cruciform DNA, conferring on it an open structure. The RuvB hexamer acts as an ATP-dependent pump, pulling dsDNA into and through the RuvAB complex. HJ branch migration allows RuvC to scan DNA until it finds its consensus sequence, where it cleaves and resolves the cruciform DNA. The sequence is that of Holliday junction branch migration complex subunit RuvA from Syntrophotalea carbinolica (strain DSM 2380 / NBRC 103641 / GraBd1) (Pelobacter carbinolicus).